Here is a 782-residue protein sequence, read N- to C-terminus: Gelsolin (782 aa).

Positions 1–27 (MAPHRPAPALLCALSLALCALSLPVRA) are cleaved as a signal peptide. Residues 53–176 (VVEHPEFLKA…YKKGGVASGF (124 aa)) are actin-severing. Residues 76–158 (FDLVPVPTNL…VQGFESATFL (83 aa)) form a Gelsolin-like 1 repeat. Y86 is modified (phosphotyrosine; by SRC; in vitro). 6 residues coordinate Ca(2+): G92, D93, E124, D136, G141, and A143. An actin-actin interfilament contact point region spans residues 123–126 (DESG). 162-169 (KSGLKYKK) provides a ligand contact to a 1,2-diacyl-sn-glycero-3-phospho-(1D-myo-inositol-4,5-bisphosphate). V172 lines the Ca(2+) pocket. 188–196 (RLFQVKGRR) is an a 1,2-diacyl-sn-glycero-3-phospho-(1D-myo-inositol-4,5-bisphosphate) binding site. A Gelsolin-like 2 repeat occupies 198 to 270 (VRATEVPVSW…SEEGTEPEAM (73 aa)). 2 residues coordinate Ca(2+): G213 and D214. A disulfide bridge connects residues C215 and C228. E236 lines the Ca(2+) pocket. Basic and acidic residues predominate over residues 247-262 (IRDNERSGRARVHVSE). Positions 247-285 (IRDNERSGRARVHVSEEGTEPEAMLQVLGPKPALPAGTE) are disordered. Ca(2+) contacts are provided by D286, E329, D330, and E354. Residues 317–389 (DENPFAQGAL…LPEGGETPLF (73 aa)) form a Gelsolin-like 3 repeat. Position 409 is a phosphotyrosine; by SRC; in vitro (Y409). The segment at 434–782 (AAQHGMDDDG…LDRAMAELAA (349 aa)) is actin-binding, Ca-sensitive. The Gelsolin-like 4 repeat unit spans residues 455-536 (SNKVPVDPAT…VQGKEPAHLM (82 aa)). Residue Y465 is modified to Phosphotyrosine; by SRC. The Ca(2+) site is built by G471, D472, E502, D514, G519, P521, and T551. One copy of the Gelsolin-like 5 repeat lies at 576-642 (TRAVEVLPKA…AEGSEPDGFW (67 aa)). K584 bears the N6-acetyllysine mark. Ca(2+) is bound by residues N591 and D592. Y603 is modified (phosphotyrosine; by SRC; in vitro). E614 contributes to the Ca(2+) binding site. Y651 is modified (phosphotyrosine; by SRC; in vitro). The Gelsolin-like 6 repeat unit spans residues 681–756 (IEEVPGELMQ…VKQGFEPPSF (76 aa)). Ca(2+) is bound by residues D696, D697, and E719. Position 742 is a phosphothreonine (T742).

This sequence belongs to the villin/gelsolin family. In terms of assembly, binds to actin and to fibronectin. Identified in a complex composed of ACTA1, COBL, GSN and TMSB4X. Interacts with the inactive form of EIF2AK2/PKR. Interacts with FLII. Post-translationally, phosphorylation on Tyr-86, Tyr-409, Tyr-465, Tyr-603 and Tyr-651 in vitro is induced in presence of phospholipids. Phagocytic cells, platelets, fibroblasts, nonmuscle cells, smooth and skeletal muscle cells.

The protein resides in the cytoplasm. Its subcellular location is the cytoskeleton. It is found in the secreted. Calcium-regulated, actin-modulating protein that binds to the plus (or barbed) ends of actin monomers or filaments, preventing monomer exchange (end-blocking or capping). It can promote the assembly of monomers into filaments (nucleation) as well as sever filaments already formed. Plays a role in ciliogenesis. This Homo sapiens (Human) protein is Gelsolin (GSN).